A 455-amino-acid polypeptide reads, in one-letter code: Gamma-aminobutyric acid receptor subunit alpha-1 (455 aa).

Residues 1–27 (MKRLLVLCDCLWAWSLLLNALTERSYG) form the signal peptide. Residues 28-253 (QTSSQDELKD…FHLKRKIGYF (226 aa)) lie on the Extracellular side of the membrane. An N-linked (GlcNAc...) asparagine glycan is attached at Asn38. Arg94 serves as a coordination point for 4-aminobutanoate. N-linked (GlcNAc...) asparagine glycosylation is present at Asn138. Thr157 contacts 4-aminobutanoate. Cys166 and Cys180 form a disulfide bridge. Residues 254–274 (VIQTYLPCIMTVILSQVSFWL) form a helical membrane-spanning segment. Topologically, residues 275–279 (NRESV) are cytoplasmic. A helical membrane pass occupies residues 280-301 (PARTVFGVTTVLTMTTLSISAR). Topologically, residues 302 to 311 (NSLPKVAYAT) are extracellular. Residues 312-333 (AMDWFIAVCYAFVFSALIEFAT) form a helical membrane-spanning segment. The Cytoplasmic portion of the chain corresponds to 334–420 (VNYFTKRGYA…TFNSVSKIDR (87 aa)). The chain crosses the membrane as a helical span at residues 421–440 (LSRIAFPLLFGIFNLVYWAT). Over 441-455 (YLNREPQLKAPTPHQ) the chain is Extracellular.

Belongs to the ligand-gated ion channel (TC 1.A.9) family. Gamma-aminobutyric acid receptor (TC 1.A.9.5) subfamily. GABRA1 sub-subfamily. As to quaternary structure, heteropentamer, formed by a combination of alpha (GABRA1-6), beta (GABRB1-3), gamma (GABRG1-3), delta (GABRD), epsilon (GABRE), rho (GABRR1-3), pi (GABRP) and theta (GABRQ) subunits, each subunit exhibiting distinct physiological and pharmacological properties. As to expression, brain.

It is found in the postsynaptic cell membrane. It localises to the cell membrane. It catalyses the reaction chloride(in) = chloride(out). With respect to regulation, allosterically activated by benzodiazepines, the neuroanesthetic alphaxalone and pentobarbital. Inhibited by the antagonist bicuculline. Potentiated by histamine. Alpha subunit of the heteropentameric ligand-gated chloride channel gated by gamma-aminobutyric acid (GABA), a major inhibitory neurotransmitter in the brain. GABA-gated chloride channels, also named GABA(A) receptors (GABAAR), consist of five subunits arranged around a central pore and contain GABA active binding site(s) located at the alpha and beta subunit interface(s). When activated by GABA, GABAARs selectively allow the flow of chloride anions across the cell membrane down their electrochemical gradient. Chloride influx into the postsynaptic neuron following GABAAR opening decreases the neuron ability to generate a new action potential, thereby reducing nerve transmission. The GABAARs can also initiate the formation of functional inhibitory GABAergic synapses. GABAARs function also as histamine receptor where histamine binds at the interface of two neighboring beta subunits and potentiates GABA response. The polypeptide is Gamma-aminobutyric acid receptor subunit alpha-1 (GABRA1) (Gallus gallus (Chicken)).